Consider the following 287-residue polypeptide: Cyclopropane mycolic acid synthase 1 (287 aa).

Residues 33-34 (YS), 68-76 (LLDVGCGWG), 94-99 (TLSKNQ), and 123-124 (WE) each bind S-adenosyl-L-methionine. Residue Cys269 is part of the active site.

The protein belongs to the CFA/CMAS family. As to quaternary structure, homodimer.

Its subcellular location is the cytoplasm. The catalysed reaction is a 1-acyl-2-(9Z)-enoyl-sn-glycero-3-phospholipid + S-adenosyl-L-methionine = a 1-acyl-2-(9-cyclopronane)-acyl-sn-glycero-3-phospholipid + S-adenosyl-L-homocysteine + H(+). It participates in lipid metabolism; mycolic acid biosynthesis. Its function is as follows. Catalyzes the conversion of a double bond to a cyclopropane ring at the distal position of an alpha mycolic acid via the transfer of a methylene group from S-adenosyl-L-methionine. Cyclopropanated mycolic acids are key factors participating in cell envelope permeability, host immunomodulation and persistence. The protein is Cyclopropane mycolic acid synthase 1 (cmaA1) of Mycobacterium tuberculosis (strain CDC 1551 / Oshkosh).